Here is a 221-residue protein sequence, read N- to C-terminus: Type II secretion system protein J (221 aa).

Positions 1–15 (MWRTNQVSSRQNMAG) are cleaved as a propeptide — leader sequence. An N-methylphenylalanine modification is found at Phe-16. The helical transmembrane segment at 16–36 (FTLIEVLVAIAIFASLSVGAY) threads the bilayer.

Belongs to the GSP J family. In terms of assembly, type II secretion is composed of four main components: the outer membrane complex, the inner membrane complex, the cytoplasmic secretion ATPase and the periplasm-spanning pseudopilus. Interacts with core component epsG. In terms of processing, cleaved by prepilin peptidase. Methylated by prepilin peptidase at the amino group of the N-terminal phenylalanine once the leader sequence is cleaved by prepilin peptidase.

It localises to the cell inner membrane. In terms of biological role, component of the type II secretion system required for the energy-dependent secretion of extracellular factors such as proteases and toxins from the periplasm. Part of the pseudopilus tip complex that is critical for the recognition and binding of secretion substrates. The sequence is that of Type II secretion system protein J (epsJ) from Vibrio cholerae serotype O1 (strain ATCC 39315 / El Tor Inaba N16961).